The primary structure comprises 225 residues: Small ribosomal subunit protein uS3 (225 aa).

The region spanning Ile-38–Lys-106 is the KH type-2 domain.

Belongs to the universal ribosomal protein uS3 family. As to quaternary structure, part of the 30S ribosomal subunit. Forms a tight complex with proteins S10 and S14.

Binds the lower part of the 30S subunit head. Binds mRNA in the 70S ribosome, positioning it for translation. The chain is Small ribosomal subunit protein uS3 from Leptospira interrogans serogroup Icterohaemorrhagiae serovar copenhageni (strain Fiocruz L1-130).